The sequence spans 183 residues: Archaemetzincin (183 aa).

Residue histidine 132 participates in Zn(2+) binding. Residue glutamate 133 is the Proton acceptor of the active site. Zn(2+)-binding residues include histidine 136, histidine 142, cysteine 143, cysteine 148, cysteine 167, and cysteine 170.

Belongs to the peptidase M54 family. Monomer. Requires Zn(2+) as cofactor.

Probable zinc metalloprotease whose natural substrate is unknown. The sequence is that of Archaemetzincin from Aeropyrum pernix (strain ATCC 700893 / DSM 11879 / JCM 9820 / NBRC 100138 / K1).